Reading from the N-terminus, the 379-residue chain is Cytochrome b (379 aa).

The next 4 membrane-spanning stretches (helical) occupy residues 34–54 (FGSL…FLAM), 78–99 (WLIR…YLHI), 114–134 (WNTG…GYVL), and 179–199 (FFTF…VHLL). Heme b contacts are provided by His-84 and His-98. Heme b-binding residues include His-183 and His-197. His-202 lines the a ubiquinone pocket. The next 4 helical transmembrane spans lie at 227–247 (YKDL…TLFY), 289–309 (LGGV…PTLH), 321–341 (LTQT…WIGG), and 348–368 (FITI…ILMP).

Belongs to the cytochrome b family. In terms of assembly, the cytochrome bc1 complex contains 3 respiratory subunits (MT-CYB, CYC1 and UQCRFS1), 2 core proteins (UQCRC1 and UQCRC2) and probably 6 low-molecular weight proteins. Heme b is required as a cofactor.

Its subcellular location is the mitochondrion inner membrane. Component of the ubiquinol-cytochrome c reductase complex (complex III or cytochrome b-c1 complex) that is part of the mitochondrial respiratory chain. The b-c1 complex mediates electron transfer from ubiquinol to cytochrome c. Contributes to the generation of a proton gradient across the mitochondrial membrane that is then used for ATP synthesis. The sequence is that of Cytochrome b (MT-CYB) from Glyptemys muhlenbergii (Bog turtle).